Reading from the N-terminus, the 259-residue chain is Insulin-like growth factor-binding protein 1 (259 aa).

The first 25 residues, 1-25, serve as a signal peptide directing secretion; the sequence is MSEVPVARVWLVLLLLTVQVGVTAG. An IGFBP N-terminal domain is found at 26 to 107; sequence APWQCAPCSA…TRGQGACVQE (82 aa). Disulfide bonds link Cys-30/Cys-57, Cys-33/Cys-59, Cys-41/Cys-60, Cys-48/Cys-63, Cys-71/Cys-84, and Cys-78/Cys-104. At Ser-45 the chain carries Phosphoserine; by FAM20C. Residues Ser-120, Ser-123, Ser-126, and Ser-144 each carry the phosphoserine modification. Ser-156 is modified (phosphoserine; by FAM20C). Residue Thr-157 is modified to Phosphothreonine; by FAM20C. Tyr-158 bears the Phosphotyrosine mark. In terms of domain architecture, Thyroglobulin type-1 spans 173-251; sequence KEPCRIELYR…SPEIRGDPNC (79 aa). 3 cysteine pairs are disulfide-bonded: Cys-176–Cys-206, Cys-217–Cys-228, and Cys-230–Cys-251. Thr-193 carries the post-translational modification Phosphothreonine; by FAM20C. A phosphoserine; by FAM20C mark is found at Ser-194 and Ser-199. Position 242 is a phosphoserine; by FAM20C (Ser-242). A Cell attachment site motif is present at residues 246-248; that stretch reads RGD.

Binds equally well IGF1 and IGF2. Interacts with integrin ITGA5:ITGB1. Interacts with VHL; this interaction inhibits HIF1A degradation. Post-translationally, phosphorylated; probably by casein kinase II. Phosphorylation alters the affinity of the protein for IGFs. In amniotic fluid, the unmodified protein is the most abundant form, while mono-, bi-, tri- and tetraphosphorylated forms are present in decreasing amounts. The phosphorylation state may influence the propensity to proteolysis.

It localises to the secreted. Its function is as follows. Multifunctional protein that plays a critical role in regulating the availability of IGFs such as IGF1 and IGF2 to their receptors and thereby regulates IGF-mediated cellular processes including cell migration, proliferation, differentiation or apoptosis in a cell-type specific manner. Also plays a positive role in cell migration by interacting with integrin ITGA5:ITGB1 through its RGD motif. Mechanistically, binding to integrins leads to activation of focal adhesion kinase/PTK2 and stimulation of the mitogen-activated protein kinase (MAPK) pathway. Regulates cardiomyocyte apoptosis by suppressing HIF-1alpha/HIF1A ubiquitination and subsequent degradation. The chain is Insulin-like growth factor-binding protein 1 (IGFBP1) from Homo sapiens (Human).